Here is a 412-residue protein sequence, read N- to C-terminus: Divalent metal cation transporter MntH (412 aa).

Transmembrane regions (helical) follow at residues 19 to 39, 46 to 66, 98 to 118, 122 to 142, 155 to 175, 196 to 216, 241 to 261, 286 to 306, 348 to 368, and 392 to 412; these read LSLM…GNFA, AAYG…AMLI, WVQA…GAAI, LLLG…TFLI, MVIG…LVFS, AVLL…IYLH, IAMT…AAAF, AAAV…TVVG, VLVL…VPLL, and LIVV…MSGI.

This sequence belongs to the NRAMP family.

It localises to the cell inner membrane. Functionally, h(+)-stimulated, divalent metal cation uptake system. This chain is Divalent metal cation transporter MntH, found in Pectobacterium carotovorum subsp. carotovorum (strain PC1).